Here is a 623-residue protein sequence, read N- to C-terminus: NAD-dependent malic enzyme 1, mitochondrial (623 aa).

Residues 1–38 (MGIANKLRLSSSSLSRILHRRILYSSAVRSFTTSEGHR) constitute a mitochondrion transit peptide. The active-site Proton donor is the Tyr-143. An NAD(+)-binding site is contributed by Arg-196. Lys-214 (proton acceptor) is an active-site residue. 3 residues coordinate a divalent metal cation: Glu-285, Asp-286, and Asp-309. Residues Asp-309 and Asn-464 each contribute to the NAD(+) site.

It belongs to the malic enzymes family. In terms of assembly, homodimer. Heterodimer of two related subunits in NAD-MEH complex. Interacts with NAD-ME2. The cofactor is Mg(2+). Mn(2+) is required as a cofactor. In terms of tissue distribution, expressed in leaves, stems, flowers, and roots (at protein level).

The protein resides in the mitochondrion. It catalyses the reaction (S)-malate + NAD(+) = pyruvate + CO2 + NADH. Activated by oxaloacetate (OAA), 2-ketoglutarate, succinate and fumarate as homodimer and by OAA, 2-ketoglutarate, succinate, fumarate and coenzyme A (acetyl-CoA and CoA) as heterodimer NAD-MEH. Functionally, involved in the regulation of sugars and amino acids metabolisms during the night period. This Arabidopsis thaliana (Mouse-ear cress) protein is NAD-dependent malic enzyme 1, mitochondrial (NAD-ME1).